The following is a 222-amino-acid chain: Glutathione S-transferase U21 (222 aa).

Residues 3–83 (AEVILLGFWP…YIDEVWSDNN (81 aa)) form the GST N-terminal domain. Residues 13–14 (SM), 40–41 (NK), 54–55 (TI), and 67–68 (ES) contribute to the glutathione site. Residues 89-211 (DPYHRAQALF…LPDSEKVVGY (123 aa)) form the GST C-terminal domain.

Belongs to the GST superfamily. Tau family.

The protein localises to the cytoplasm. Its subcellular location is the cytosol. It catalyses the reaction RX + glutathione = an S-substituted glutathione + a halide anion + H(+). In terms of biological role, may be involved in the conjugation of reduced glutathione to a wide number of exogenous and endogenous hydrophobic electrophiles and have a detoxification role against certain herbicides. The protein is Glutathione S-transferase U21 (GSTU21) of Arabidopsis thaliana (Mouse-ear cress).